The following is a 325-amino-acid chain: MANQKLPTLKYTGKSESAVPIVSESELQTVTAEPWVKISDKGLQLEGLNFNREGQLFLLDVFEGNIFKVNPATKEVTTKFQSVKDNPAAIKVHKDGRLFICYLGDFKTTGGIFATTEKGEQIEEIISDLNTEYCIDDMVFDSKGGFYFTDFRGYSTQPLGGVYYVDPDFKTVTPIIQNISVANGIALSTDEKVLWVTETTTNRLHRIALEDDGVTIAPFGATIPYYFTGHEGPDSCCIDSNDNLYVAMYGQGRVLVFNKRGYPIGQILMPGRDDGKMLRTTHPQFIPGTNQLIICTNDIENHSEGGSMLYTVNGFAKGYESYQFQ.

Positions 46, 108, 110, 128, 131, 133, 136, 183, 234, and 235 each coordinate Ca(2+). The Proton donor role is filled by D234.

This sequence belongs to the SMP-30/CGR1 family. Ca(2+) is required as a cofactor.

The protein localises to the cytoplasm. Exhibits lactonase activity. Acts in cells with perturbed membrane integrity and is possibly related to the membrane homeostasis. The chain is Lactonase drp35 (drp35) from Staphylococcus epidermidis (strain ATCC 35984 / DSM 28319 / BCRC 17069 / CCUG 31568 / BM 3577 / RP62A).